Reading from the N-terminus, the 801-residue chain is Na(+)/H(+) antiporter subunit A1 (801 aa).

The next 20 helical transmembrane spans lie at 1–21 (MSLL…IPFL), 30–50 (LGWF…SLIS), 79–99 (LGLL…LYSI), 117–137 (LFMG…LYLF), 166–186 (LIIT…LSLA), 206–226 (PFFI…SAQV), 228–250 (FYIW…HSAT), 265–285 (IFAI…ITLF), 300–320 (ILAF…GIGA), 337–357 (FVAA…LFMI), 373–393 (LGGL…TTLS), 427–447 (LGIL…VYSI), 472–492 (ILML…GLFP), 522–542 (GITP…LLLI), 591–611 (LVII…SVPF), 623–643 (VFEG…IFAK), 646–666 (LFSI…FIFF), 671–691 (LALT…LCFY), 707–727 (LTNA…GLIG), and 764–784 (MDTL…YTMI).

Belongs to the CPA3 antiporters (TC 2.A.63) subunit A family. In terms of assembly, may form a heterooligomeric complex that consists of seven subunits: mnhA1, mnhB1, mnhC1, mnhD1, mnhE1, mnhF1 and mnhG1.

The protein resides in the cell membrane. Its function is as follows. Mnh complex is a Na(+)/H(+) antiporter involved in Na(+) excretion. The sequence is that of Na(+)/H(+) antiporter subunit A1 (mnhA1) from Staphylococcus epidermidis (strain ATCC 35984 / DSM 28319 / BCRC 17069 / CCUG 31568 / BM 3577 / RP62A).